A 465-amino-acid polypeptide reads, in one-letter code: UDP-N-acetylmuramate--L-alanine ligase (465 aa).

112-118 (GTHGKTT) provides a ligand contact to ATP.

It belongs to the MurCDEF family.

Its subcellular location is the cytoplasm. It catalyses the reaction UDP-N-acetyl-alpha-D-muramate + L-alanine + ATP = UDP-N-acetyl-alpha-D-muramoyl-L-alanine + ADP + phosphate + H(+). It participates in cell wall biogenesis; peptidoglycan biosynthesis. Cell wall formation. In Burkholderia lata (strain ATCC 17760 / DSM 23089 / LMG 22485 / NCIMB 9086 / R18194 / 383), this protein is UDP-N-acetylmuramate--L-alanine ligase.